Consider the following 284-residue polypeptide: Genome polyprotein (284 aa).

2 disordered regions span residues 16–57 (HQAN…GTSG) and 255–284 (GIST…GKNM). The segment covering 35-44 (EQSSIQSNLS) has biased composition (polar residues).

Belongs to the potyviridae genome polyprotein family. Genome polyprotein of potyviruses undergoes post-translational proteolytic processing by the main proteinase NIa-pro resulting in the production of at least ten individual proteins. The P1 proteinase and the HC-pro cleave only their respective C-termini autocatalytically. 6K1 is essential for proper proteolytic separation of P3 from CI.

It localises to the virion. The catalysed reaction is RNA(n) + a ribonucleoside 5'-triphosphate = RNA(n+1) + diphosphate. An RNA-dependent RNA polymerase that plays an essential role in the virus replication. Functionally, involved in aphid transmission, cell-to-cell and systemis movement, encapsidation of the viral RNA and in the regulation of viral RNA amplification. The sequence is that of Genome polyprotein from Capsicum (peppers).